A 196-amino-acid polypeptide reads, in one-letter code: Peptide methionine sulfoxide reductase (196 aa).

Positions 1–14 are enriched in polar residues; that stretch reads MEGNNSSSKSTTNP. The disordered stretch occupies residues 1–23; sequence MEGNNSSSKSTTNPALDPDLDSP.

Belongs to the MsrA Met sulfoxide reductase family.

The catalysed reaction is L-methionyl-[protein] + [thioredoxin]-disulfide + H2O = L-methionyl-(S)-S-oxide-[protein] + [thioredoxin]-dithiol. It catalyses the reaction [thioredoxin]-disulfide + L-methionine + H2O = L-methionine (S)-S-oxide + [thioredoxin]-dithiol. Has an important function as a repair enzyme for proteins that have been inactivated by oxidation. Catalyzes the reversible oxidation-reduction of methionine sulfoxide in proteins to methionine. This is Peptide methionine sulfoxide reductase (E4) from Solanum lycopersicum (Tomato).